A 100-amino-acid chain; its full sequence is Urease subunit gamma (100 aa).

It belongs to the urease gamma subunit family. In terms of assembly, heterotrimer of UreA (gamma), UreB (beta) and UreC (alpha) subunits. Three heterotrimers associate to form the active enzyme.

The protein localises to the cytoplasm. It carries out the reaction urea + 2 H2O + H(+) = hydrogencarbonate + 2 NH4(+). Its pathway is nitrogen metabolism; urea degradation; CO(2) and NH(3) from urea (urease route): step 1/1. The chain is Urease subunit gamma from Cupriavidus metallidurans (strain ATCC 43123 / DSM 2839 / NBRC 102507 / CH34) (Ralstonia metallidurans).